Consider the following 262-residue polypeptide: 5'-nucleotidase SurE (262 aa).

The a divalent metal cation site is built by D9, D10, S40, and N95.

The protein belongs to the SurE nucleotidase family. A divalent metal cation serves as cofactor.

The protein localises to the cytoplasm. It carries out the reaction a ribonucleoside 5'-phosphate + H2O = a ribonucleoside + phosphate. Its function is as follows. Nucleotidase that shows phosphatase activity on nucleoside 5'-monophosphates. This is 5'-nucleotidase SurE from Aliarcobacter butzleri (strain RM4018) (Arcobacter butzleri).